The chain runs to 428 residues: MPRVYIGSLRELNHNDNVEIYGWLQDLKLLKNVSFLIMRDRTGTVQVTFKNTPDIVNLLKELPRESVLKISGKINKKSVSKSGLEVSGESVEVLNRSERPLPLPVIDPVQADLETRLNNRFIDLRKRDVSSIFNAESSILWGIREFLHSQGFIEVHTPKIVAAATEGGADLFPVKYFENDAYLNQSPQLYKEILMSSGFEKVFEVGPAFRAEEHNTTRHLNEFTSIDIEMSFADHNDAMRILENAVKSGIENMINENGKDLQENGINISIPEIPFPRITYKECIKLLEKEGLEFQFGNDFSPEELRIIGRNFKDFYFITEWPSSLRPFYTMPNRDDPTITNSFDLQYREVEVTSGAQRVHDPDLLLKRFNEKKLNIDSFKFYIQAFKYGMPPHAGWGLGLERLTMIVLGLNNIRETTLFPRDRTRIIP.

Glutamate 166 provides a ligand contact to L-aspartate. Residues 188 to 191 (QLYK) form an aspartate region. Residue arginine 210 coordinates L-aspartate. ATP contacts are provided by residues 210–212 (RAE), 218–220 (RHL), and glutamate 351. 2 residues coordinate Mg(2+): glutamate 351 and serine 354. Residues serine 354 and arginine 358 each contribute to the L-aspartate site. Residue 399 to 402 (GLER) coordinates ATP.

This sequence belongs to the class-II aminoacyl-tRNA synthetase family. Type 2 subfamily. In terms of assembly, homodimer. Mg(2+) serves as cofactor.

Its subcellular location is the cytoplasm. The catalysed reaction is tRNA(Asp) + L-aspartate + ATP = L-aspartyl-tRNA(Asp) + AMP + diphosphate. Its function is as follows. Catalyzes the attachment of L-aspartate to tRNA(Asp) in a two-step reaction: L-aspartate is first activated by ATP to form Asp-AMP and then transferred to the acceptor end of tRNA(Asp). The protein is Aspartate--tRNA(Asp) ligase of Thermoplasma volcanium (strain ATCC 51530 / DSM 4299 / JCM 9571 / NBRC 15438 / GSS1).